The sequence spans 291 residues: Ribose-phosphate pyrophosphokinase (291 aa).

ATP contacts are provided by residues 34-36 (DGE) and 92-93 (RQ). 2 residues coordinate Mg(2+): histidine 125 and aspartate 165. Lysine 188 is an active-site residue. Arginine 190 and aspartate 214 together coordinate D-ribose 5-phosphate.

This sequence belongs to the ribose-phosphate pyrophosphokinase family. Class III (archaeal) subfamily. The cofactor is Mg(2+).

It is found in the cytoplasm. The catalysed reaction is D-ribose 5-phosphate + ATP = 5-phospho-alpha-D-ribose 1-diphosphate + AMP + H(+). It participates in metabolic intermediate biosynthesis; 5-phospho-alpha-D-ribose 1-diphosphate biosynthesis; 5-phospho-alpha-D-ribose 1-diphosphate from D-ribose 5-phosphate (route I): step 1/1. Involved in the biosynthesis of the central metabolite phospho-alpha-D-ribosyl-1-pyrophosphate (PRPP) via the transfer of pyrophosphoryl group from ATP to 1-hydroxyl of ribose-5-phosphate (Rib-5-P). This chain is Ribose-phosphate pyrophosphokinase, found in Methanopyrus kandleri (strain AV19 / DSM 6324 / JCM 9639 / NBRC 100938).